Consider the following 348-residue polypeptide: PDZ and LIM domain protein 2 (348 aa).

In terms of domain architecture, PDZ spans 1–84 (MALTVDVVGP…PLRLQLDRPQ (84 aa)). A disordered region spans residues 67–139 (SKIRQSPSPL…PPTSPQAPTG (73 aa)). Over residues 103-118 (RFQSSRRTHTDSQASL) the composition is skewed to polar residues. Residues serine 117, serine 119, and serine 124 each carry the phosphoserine modification. Threonine 128 and threonine 132 each carry phosphothreonine. Serine 133, serine 153, serine 191, serine 197, serine 198, serine 202, serine 209, and serine 262 each carry phosphoserine. The tract at residues 165–202 (GGRRGSRQASLSPAGDSAVLVLPPPPSPGARSSSSRLS) is disordered. The segment covering 193-202 (GARSSSSRLS) has biased composition (low complexity). Residues 249–275 (ERGGTPAYLPSSLSPQSSLPTSRALAS) are disordered. The span at 257–270 (LPSSLSPQSSLPTS) shows a compositional bias: low complexity. Positions 280-340 (HTCEKCNTSI…EKHARQRYSA (61 aa)) constitute an LIM zinc-binding domain.

Interacts with alpha-actinins ACTN1 and ACTN4, FLNA and MYH9. Interacts (via LIM zinc-binding domain) with MKRN2.

It localises to the cytoplasm. Its subcellular location is the cytoskeleton. Probable adapter protein located at the actin cytoskeleton that promotes cell attachment. Necessary for the migratory capacity of epithelial cells. Overexpression enhances cell adhesion to collagen and fibronectin and suppresses anchorage independent growth. May contribute to tumor cell migratory capacity. The chain is PDZ and LIM domain protein 2 (PDLIM2) from Bos taurus (Bovine).